The following is a 607-amino-acid chain: Tyrosine-protein kinase RYK (607 aa).

A disordered region spans residues 1–20 (MRGAARLGRPGRSCLPGARG). The signal sequence occupies residues 1–25 (MRGAARLGRPGRSCLPGARGLRAPP). At 26 to 227 (PPPLLLLLAL…VHAAPTTSTR (202 aa)) the chain is on the extracellular side. The WIF domain maps to 66-194 (LYLSEDEVRR…VLNFKRRKMC (129 aa)). N-linked (GlcNAc...) asparagine glycosylation is found at N139, N174, N178, N182, and N209. C159 and C194 are disulfide-bonded. Residues 228 to 248 (VFYISVGVCCAVIFLVAIILA) form a helical membrane-spanning segment. Residues 249–607 (VLHLHSMKRI…EFHAALGAYV (359 aa)) lie on the Cytoplasmic side of the membrane. Residues 266–282 (ASSSSQGLSQPSTQTTQ) are compositionally biased toward low complexity. The segment at 266–290 (ASSSSQGLSQPSTQTTQYLRADTPN) is disordered. The Protein kinase domain occupies 330–603 (ITLKDVLQEG…QCLTEFHAAL (274 aa)). Residues 336–344 (LQEGTFGRI) and K364 each bind ATP. D465 functions as the Proton acceptor in the catalytic mechanism. Y495 carries the phosphotyrosine; by autocatalysis modification.

The protein belongs to the protein kinase superfamily. Tyr protein kinase family. In terms of assembly, interacts with DVL1 (via PDZ domain). In terms of processing, proteolytically cleaved, in part by presenilin, in response to WNT3 stimulation. Cleavage occurs during neuronal differentiation. In terms of tissue distribution, observed in all the tissues examined.

The protein localises to the membrane. Its subcellular location is the nucleus. It localises to the cytoplasm. It carries out the reaction L-tyrosyl-[protein] + ATP = O-phospho-L-tyrosyl-[protein] + ADP + H(+). May be a coreceptor along with FZD8 of Wnt proteins, such as WNT1, WNT3, WNT3A and WNT5A. Involved in neuron differentiation, axon guidance, corpus callosum establishment and neurite outgrowth. In response to WNT3 stimulation, receptor C-terminal cleavage occurs in its transmembrane region and allows the C-terminal intracellular product to translocate from the cytoplasm to the nucleus where it plays a crucial role in neuronal development. The protein is Tyrosine-protein kinase RYK of Homo sapiens (Human).